Consider the following 364-residue polypeptide: Phenylalanine dehydrogenase (364 aa).

R62 is an NAD(+) binding site. K86 serves as a coordination point for L-phenylalanine. Catalysis depends on K98, which acts as the Proton donor/acceptor. NAD(+) contacts are provided by residues D133, S164, T168, 255-256, and 276-278; these read AM and AAN. N278 contacts L-phenylalanine.

This sequence belongs to the Glu/Leu/Phe/Val dehydrogenases family.

The catalysed reaction is L-phenylalanine + NAD(+) + H2O = 3-phenylpyruvate + NH4(+) + NADH + H(+). The protein operates within amino-acid biosynthesis; L-phenylalanine biosynthesis; L-phenylalanine from phenylpyruvate (PDH route): step 1/1. Its function is as follows. Catalyzes the reversible NAD(+)-dependent oxidative deamination of L-phenylalanine to phenylpyruvate. The polypeptide is Phenylalanine dehydrogenase (Rhodococcus jostii (strain RHA1)).